We begin with the raw amino-acid sequence, 712 residues long: MMEVGFSLIQWLISSGADSPFIFGWLVTGSVGLLAVIYTFLKWQKKTSLNWVKAAAREKKKVWKRLRVPLSHHQWTDDYGYGQQPSTCCVCLYSLVPGQNVSNKASLSIPVHRCAVCGVAAHFYCSSSAAKDCKCVAQAGSDHVRHHWSERWVNMDDNADMTAFCFYCDEPCGIPFIEASPMWHCLWCQRLIHVKCHMIMSKESGDACDLGSLRRVILSPVHVKLNEANGVDGVLTTIKNELASIRGHVRRKRHRGKNGNGQSLNGKLLEDSVSDPVKTVVNGLVVKKLRRDRSIDCLKQVSDMPNAKGLQNGIGGHKRNKSAALNFMKKFSLVDLPPDARPLLVFINAKSGGQLGPFLHRRLNMLLNPVQVFELGSCQGPDAGLDLCSKVKYFRVLVCGGDGTVAWVLDAIEKRNFESPPPVAILPLGTGNDLSRVLQWGRGISVVDGQGSLRTFLQDIDHAAVTMLDRWSVKIVEESTEKFPAREGHKFMMNYLGIGCDAKVAYEFHMMRQEKPEKFCSQFVNKLRYAKEGARDIMDRACADLPWQVWLEVDGKDIEIPKDSEGLIVLNIGSYMGGVDLWQNDYEHDDNFSIQCMHDKTLEVVCVRGAWHLGKLQVGLSQARRLAQGKVIRIHVSSPFPVQIDGEPFIQQPGCLEITHHGQVFMLRRASDEPRGHAAAIMNEVLLDAECKGVINASQKKVLLQQMALHLS.

Phorbol-ester/DAG-type zinc fingers lie at residues H72–C133 and R145–C208. The region spanning P338–S479 is the DAGKc domain.

The protein belongs to the eukaryotic diacylglycerol kinase family. As to quaternary structure, monomer. In terms of tissue distribution, expressed in rosette and cauline leaves, flowers, siliques and roots. Highly expressed in young leaves and at lower levels in older leaves. In young seedlings, expressed at the root-shoot junction zone and vascular bundles of the cotyledons. In older plants, expressed in root tip, central cylinder, root hair, leaf mesophyll cells and guard cells, sepals, filaments of the anthers, stigma, valves of young and early adult siliques and hilum of seeds.

It localises to the endoplasmic reticulum. The enzyme catalyses a 1,2-diacyl-sn-glycerol + ATP = a 1,2-diacyl-sn-glycero-3-phosphate + ADP + H(+). It catalyses the reaction 1-octadecanoyl-2-(5Z,8Z,11Z,14Z-eicosatetraenoyl)-sn-glycerol + ATP = 1-octadecanoyl-2-(5Z,8Z,11Z,14Z-eicosatetraenoyl)-sn-glycero-3-phosphate + ADP + H(+). It carries out the reaction 1,2-di-(9Z-octadecenoyl)-sn-glycerol + ATP = 1,2-di-(9Z-octadecenoyl)-sn-glycero-3-phosphate + ADP + H(+). Phosphorylates the second messenger diacylglycerol (DAG) to generate phosphatidic acid (PA), another important signaling molecule. PA is required for plant development and responses to abiotic stress and pathogen attack. May be involved in the accumulation of PA during cold stress. Involved in response to freezing stress by modulating the accumulation of PA. Exhibits high specificity for the unsaturated DAG analogs 1-stearoyl-2-arachidonoyl-sn-glycerol (1,2-SAG) and 1,2-dioleoyl-sn-glycerol (1,2-DOG). Exhibits high specificity for 1-palmitoyl, 2-oleoyl-sn-glycerol (1,2 POG), 1-stearoyl, 2-linoleoyl-sn-glycerol (1,2-SLG) and 1-oleoyl, 2-palmitoyl-sn-glycerol (1,2-OPG). Has almost no activity toward 1,2-dioctanoyl-sn-glycerol (1,2-DOCG), 1,2-dipalmitoyl-sn-glycerol (1,2-DPG), 1,2-dimyristoyl-sn-glycerol (1,2-DMG) and 1-oleoyl-2-acetyl-sn-glycerol (1,2-OAG). Functions together with DGK4 in male gametophyte development and biosynthesis of phosphatidylglycerol and phosphatidylinositol in the endoplasmic reticulum (ER). Involved in PA production for pollen grain growth, as well as leaf and root growth. This is Diacylglycerol kinase 2 from Arabidopsis thaliana (Mouse-ear cress).